We begin with the raw amino-acid sequence, 83 residues long: MKTLLLTLVVVTIVCLDLGYTRRCFNQQSSEPQTNKSCPPGENSCYRKQWRDHRGTIIERGCGCPTVKPGIKLRCCESEDCNN.

The first 21 residues, 1 to 21 (MKTLLLTLVVVTIVCLDLGYT), serve as a signal peptide directing secretion. Cystine bridges form between cysteine 24–cysteine 45, cysteine 38–cysteine 62, cysteine 64–cysteine 75, and cysteine 76–cysteine 81.

The protein belongs to the three-finger toxin family. Short-chain subfamily. Type I alpha-neurotoxin sub-subfamily. Expressed by the venom gland.

It localises to the secreted. In terms of biological role, binds to muscle nicotinic acetylcholine receptor (nAChR) and inhibit acetylcholine from binding to the receptor, thereby impairing neuromuscular transmission. In Laticauda semifasciata (Black-banded sea krait), this protein is Short neurotoxin OKI-Ed.